The following is a 326-amino-acid chain: Protein-arginine N-acetylglucosaminyltransferase NleB2 (326 aa).

UDP-N-acetyl-alpha-D-glucosamine contacts are provided by residues 45-47 (QWF), Tyr69, and 216-219 (YLDM). Residues 218–220 (DMD) carry the DXD motif motif. Asp220 is a binding site for Mn(2+). Glu250 (proton acceptor) is an active-site residue. Positions 317 and 319 each coordinate Mn(2+). Residues Ser319 and 324-326 (SSW) contribute to the UDP-N-acetyl-alpha-D-glucosamine site.

The protein belongs to the glycosyltransferase NleB family. Mn(2+) is required as a cofactor.

It is found in the secreted. The protein resides in the host cell. The catalysed reaction is L-arginyl-[protein] + UDP-N-acetyl-alpha-D-glucosamine = N(omega)-(N-acetyl-beta-D-glucosaminyl)-L-arginyl-[protein] + UDP + H(+). In terms of biological role, protein-arginine N-acetylglucosaminyltransferase effector that catalyzes the transfer of a single N-acetylglucosamine (GlcNAc) to a conserved arginine residue of host target proteins. In contrast to NleB1, not able to disrupt TNF signaling in infected cells. Shows a lower enzymatic activity than NleB1. In Escherichia coli O127:H6 (strain E2348/69 / EPEC), this protein is Protein-arginine N-acetylglucosaminyltransferase NleB2.